Here is a 410-residue protein sequence, read N- to C-terminus: Methylamine dehydrogenase heavy chain (410 aa).

Residues 1–35 (MTHAYTKVRQALCYGSATLGAAALAALIAAGSAAA) form the signal peptide.

Belongs to the aromatic amine dehydrogenase heavy chain family. In terms of assembly, tetramer of two light and two heavy chains.

The protein resides in the periplasm. The catalysed reaction is 2 oxidized [amicyanin] + methylamine + H2O = 2 reduced [amicyanin] + formaldehyde + NH4(+) + 2 H(+). Functionally, methylamine dehydrogenase carries out the oxidation of methylamine. Electrons are passed from methylamine dehydrogenase to amicyanin. The polypeptide is Methylamine dehydrogenase heavy chain (mauB) (Methylorubrum extorquens (strain ATCC 14718 / DSM 1338 / JCM 2805 / NCIMB 9133 / AM1) (Methylobacterium extorquens)).